A 720-amino-acid polypeptide reads, in one-letter code: Methionine--tRNA ligase (720 aa).

The short motif at 27–37 is the 'HIGH' region element; sequence PYANGQIHIGH. Positions 158, 161, 171, and 174 each coordinate Zn(2+). Positions 348 to 352 match the 'KMSKS' region motif; it reads KMSKS. K351 lines the ATP pocket. Residues 614-720 form the tRNA-binding domain; it reads DFAKIDLRIA…SGAKPGMRVK (107 aa).

Belongs to the class-I aminoacyl-tRNA synthetase family. MetG type 1 subfamily. Homodimer. The cofactor is Zn(2+).

Its subcellular location is the cytoplasm. It carries out the reaction tRNA(Met) + L-methionine + ATP = L-methionyl-tRNA(Met) + AMP + diphosphate. Is required not only for elongation of protein synthesis but also for the initiation of all mRNA translation through initiator tRNA(fMet) aminoacylation. This chain is Methionine--tRNA ligase, found in Burkholderia lata (strain ATCC 17760 / DSM 23089 / LMG 22485 / NCIMB 9086 / R18194 / 383).